The chain runs to 422 residues: MSALSTLKKRLAACNRASQYKLETSLNPMPTFRLLRNTKWSWTHLQYVFLAGNLIFACIVIESPGFWGKFGIACLLAIALTVPLTRQIFFPAIVIITWAILFYSCRFIPERWRPPIWVRVLPTLENILYGSNLSSLLSKTTHSILDILAWVPYGVMHYSAPFIISFILFIFAPPGTLPVWARTFGYMNLFGVLIQMAFPCSPPWYENMYGLEPATYAVRGSPGGLARIDALFGTSIYTDGFSNSPVVFGAFPSLHAGWAMLEALFLSHVFPRYRFCFYGYVLWLCWCTMYLTHHYFVDLVGGMCLAIICFVFAQKLRLPQLQTGKILRWEYEFVIHGHGLSEKTSNSLARTGSPYLLGRDSFTQNPNAVAFMSGLNNMELANTDHEWSVGSSSPEPLPSPAADLIDRPASTTSSIFDASHLP.

At 1 to 47 the chain is on the cytoplasmic side; that stretch reads MSALSTLKKRLAACNRASQYKLETSLNPMPTFRLLRNTKWSWTHLQY. 2 consecutive transmembrane segments (helical) span residues 48 to 68 and 69 to 85; these read VFLAGNLIFACIVIESPGFWG and KFGIACLLAIALTVPLT. Residues 86–87 are Cytoplasmic-facing; sequence RQ. Residues 88–108 form a helical membrane-spanning segment; sequence IFFPAIVIITWAILFYSCRFI. Over 109–159 the chain is Lumenal; that stretch reads PERWRPPIWVRVLPTLENILYGSNLSSLLSKTTHSILDILAWVPYGVMHYS. Asparagine 132 carries an N-linked (GlcNAc...) asparagine glycan. A helical membrane pass occupies residues 160–180; it reads APFIISFILFIFAPPGTLPVW. Topologically, residues 181–183 are cytoplasmic; it reads ART. The chain crosses the membrane as a helical span at residues 184 to 204; it reads FGYMNLFGVLIQMAFPCSPPW. Residues 205–245 lie on the Lumenal side of the membrane; sequence YENMYGLEPATYAVRGSPGGLARIDALFGTSIYTDGFSNSP. A helical transmembrane segment spans residues 246-266; it reads VVFGAFPSLHAGWAMLEALFL. Residues 267–274 are Cytoplasmic-facing; that stretch reads SHVFPRYR. Helical transmembrane passes span 275–292 and 293–313; these read FCFYGYVLWLCWCTMYLT and HHYFVDLVGGMCLAIICFVFA. At 314-422 the chain is on the cytoplasmic side; that stretch reads QKLRLPQLQT…SSIFDASHLP (109 aa). Phosphoserine is present on serine 353. The interval 386-406 is disordered; that stretch reads EWSVGSSSPEPLPSPAADLID.

This sequence belongs to the AUR1 family. Component of the inositol phosphorylceramide synthase complex composed of at least aur1 and kei1.

The protein localises to the golgi apparatus. The protein resides in the golgi stack membrane. Its activity is regulated as follows. Inhibited by aureobasidin A (AbA). Its function is as follows. Catalytic component of the inositol phosphorylceramide synthase which catalyzes the addition of a phosphorylinositol group onto ceramide to form inositol phosphorylceramide, an essential step in sphingolipid biosynthesis. The polypeptide is Inositol phosphorylceramide synthase catalytic subunit aur1 (aur1) (Schizosaccharomyces pombe (strain 972 / ATCC 24843) (Fission yeast)).